The primary structure comprises 1199 residues: Major DNA-binding protein (1199 aa).

The tract at residues 289-314 is disordered; it reads SGTTTARGARRNDVNSTSKPSPSGGF. Residues 497–510 fold into a zinc finger; it reads CSLCEKHTRPVCAH. Short sequence motifs (required for filament formation) lie at residues 841–842 and 1146–1148; these read FW and FNF. The required for nuclear localization stretch occupies residues 1172–1199; sequence LKRPPEDDELFDLSGIPIKHGNITMEMI.

This sequence belongs to the herpesviridae major DNA-binding protein family. In terms of assembly, homooligomers. Forms double-helical filaments necessary for the formation of replication compartments within the host nucleus. Interacts with the origin-binding protein. Interacts with the helicase primase complex; this interaction stimulates primer synthesis activity of the helicase-primase complex. Interacts with the DNA polymerase. Interacts with the alkaline exonuclease; this interaction increases its nuclease processivity.

The protein localises to the host nucleus. Plays several crucial roles in viral infection. Participates in the opening of the viral DNA origin to initiate replication by interacting with the origin-binding protein. May disrupt loops, hairpins and other secondary structures present on ssDNA to reduce and eliminate pausing of viral DNA polymerase at specific sites during elongation. Promotes viral DNA recombination by performing strand-transfer, characterized by the ability to transfer a DNA strand from a linear duplex to a complementary single-stranded DNA circle. Can also catalyze the renaturation of complementary single strands. Additionally, reorganizes the host cell nucleus, leading to the formation of prereplicative sites and replication compartments. This process is driven by the protein which can form double-helical filaments in the absence of DNA. In Varicella-zoster virus (strain Oka vaccine) (HHV-3), this protein is Major DNA-binding protein.